A 318-amino-acid polypeptide reads, in one-letter code: Myoblast determination protein 1 (318 aa).

Methionine 1 participates in a covalent cross-link: Peptide (Met-Gly) (interchain with G-Cter in ubiquitin). Lysine 104 carries the post-translational modification N6-methyllysine; by EHMT2. A bHLH domain is found at 109–160 (DRRKAATMRERRRLSKVNEAFETLKRCTSSNPNQRLPKVEILRNAIRYIEGL). Disordered regions lie at residues 175–225 (AAFY…QNGY) and 265–318 (APAL…YQVL). A compositionally biased stretch (polar residues) spans 196 to 206 (SDASSPRSNCS). Residues 265 to 274 (APALLLADAP) are compositionally biased toward low complexity. Composition is skewed to polar residues over residues 287–298 (LSDTEQGTQTPS) and 307–318 (AGSNPNAIYQVL).

Interacts with SUV39H1. Efficient DNA binding requires dimerization with another bHLH protein. Seems to form active heterodimers with ITF-2. Interacts with DDX5. Interacts with CHD2. Interacts with TSC22D3 isoform 1 and isoform 4. Interacts with SETD3. Interacts with P-TEFB complex; promotes the transcriptional activity of MYOD1 through its CDK9-mediated phosphorylation. Interacts with CSRP3. Interacts with NUPR1. Post-translationally, acetylated by a complex containing EP300 and PCAF. The acetylation is essential to activate target genes. Conversely, its deacetylation by SIRT1 inhibits its function. In terms of processing, ubiquitinated on the N-terminus; which is required for proteasomal degradation. Phosphorylated by CDK9. This phosphorylation promotes its function in muscle differentiation. Post-translationally, methylation at Lys-104 by EHMT2/G9a inhibits myogenic activity.

It is found in the nucleus. Functionally, acts as a transcriptional activator that promotes transcription of muscle-specific target genes and plays a role in muscle differentiation. Together with MYF5 and MYOG, co-occupies muscle-specific gene promoter core region during myogenesis. Induces fibroblasts to differentiate into myoblasts. Interacts with and is inhibited by the twist protein. This interaction probably involves the basic domains of both proteins. The sequence is that of Myoblast determination protein 1 (Myod1) from Mus musculus (Mouse).